A 146-amino-acid chain; its full sequence is uncharacterized protein (146 aa).

Basic and acidic residues predominate over residues 119–128 (AQADLEHEES). The disordered stretch occupies residues 119–146 (AQADLEHEESASIDQDEMVAIETRKTKK).

This is an uncharacterized protein from Schizosaccharomyces pombe (strain 972 / ATCC 24843) (Fission yeast).